Reading from the N-terminus, the 627-residue chain is Neuronal acetylcholine receptor subunit alpha-4 (627 aa).

The first 26 residues, 1-26, serve as a signal peptide directing secretion; it reads MELGGPGAPRLLPPLLLLLGTGLLRA. Residues 27 to 249 are Extracellular-facing; sequence SSHVETRAHA…RRLPLFYTIN (223 aa). The N-linked (GlcNAc...) asparagine glycan is linked to N57. The Ca(2+) site is built by V76 and E78. Residues N107 and N174 are each glycosylated (N-linked (GlcNAc...) asparagine). 2 disulfides stabilise this stretch: C161–C175 and C225–C226. A helical membrane pass occupies residues 250–269; sequence LIIPCLLISCLTVLVFYLPS. C271 carries S-palmitoyl cysteine lipidation. The next 2 membrane-spanning stretches (helical) occupy residues 275–291 and 306–330; these read ITLC…FLLL and IGEY…VLNV. The Cytoplasmic segment spans residues 331 to 600; that stretch reads HHRSPRTHTM…WKYVAMVIDR (270 aa). Disordered stretches follow at residues 382–481 and 496–561; these read PRFW…VEGG and DDAA…LPLS. At S424 the chain carries Phosphoserine. The span at 501-511 shows a compositional bias: low complexity; the sequence is EADGQAAGALA. S538 and S541 each carry phosphoserine. The segment covering 538–548 has biased composition (polar residues); sequence SSVSPSATVKT. The helical transmembrane segment at 601-619 threads the bilayer; the sequence is IFLWMFIIVCLLGTVGLFL.

The protein belongs to the ligand-gated ion channel (TC 1.A.9) family. Acetylcholine receptor (TC 1.A.9.1) subfamily. Alpha-4/CHRNA4 sub-subfamily. Neuronal AChR is composed of two different types of subunits: alpha and beta. CHRNA4 forms heteropentameric neuronal acetylcholine receptors with CHRNB2 and CHRNB4, as well as CHRNA5 and CHRNB3 as accesory subunits. Found in two major stoichiometric forms, LS (low agonist sensitivity): (CHRNA4)3:(CHRNB2)2 and HS (high agonist sensitivity): (CHRNA4)2:(CHRNB2)3, the two stoichiometric forms differ in their unitary conductance, calcium permeability, ACh sensitivity and potentiation by divalent cation. Cells produce predominantly an (CHRNA4)3:(CHRNB2)2 nAChR. The (CHRNA4)2:(CHRNB2)3 expression is selectively up-regulated by nicotine and has lower single channel conductance and calcium permeability. In the striatum, also forms CHRNA4:CHRNA6:CHRNB2 complexes. Also found in the stoichiometric form: (CHRNA4:CHRNB2)2:CHRNB3. Interacts with RIC3; which is required for proper folding and assembly. Interacts with LYPD6.

It is found in the synaptic cell membrane. The protein localises to the cell membrane. The catalysed reaction is Ca(2+)(in) = Ca(2+)(out). It carries out the reaction K(+)(in) = K(+)(out). The enzyme catalyses Na(+)(in) = Na(+)(out). Its activity is regulated as follows. Activated by a myriad of ligands such as acetylcholine, cytisine, nicotine, choline and epibatidine. Channel potentiation by calcium is stoichiometry-selective, CHRNA4:CHRNB2 nACh receptor is achieved by calcium association with topographically distinct sites framed by anionic residues within the CHRNA4 subunit and between the CHRNA4 and CHRNB2 subunits. nAChR activity is inhibited by the antagonist alpha-conotoxins BuIA, PnIA, GID and MII, small disulfide-constrained peptides from cone snails. Functionally, component of neuronal acetylcholine receptors (nAChRs) that function as pentameric, ligand-gated cation channels with high calcium permeability among other activities. nAChRs are excitatory neurotrasnmitter receptors formed by a collection of nAChR subunits known to mediate synaptic transmission in the nervous system and the neuromuscular junction. Each nAchR subunit confers differential attributes to channel properties, including activation, deactivation and desensitization kinetics, pH sensitivity, cation permeability, and binding to allosteric modulators. CHRNA4 forms heteropentameric neuronal acetylcholine receptors with CHRNB2 and CHRNB4, as well as CHRNA5 and CHRNB3 as accesory subunits. Is the most abundant nAChR subtype expressed in the central nervous system. Found in two major stoichiometric forms,(CHRNA4)3:(CHRNB2)2 and (CHRNA4)2:(CHRNB2)3, the two stoichiometric forms differ in their unitary conductance, calcium permeability, ACh sensitivity and potentiation by divalent cation. Involved in the modulation of calcium-dependent signaling pathways, influences the release of neurotransmitters, including dopamine, glutamate and GABA. The polypeptide is Neuronal acetylcholine receptor subunit alpha-4 (Homo sapiens (Human)).